Consider the following 704-residue polypeptide: Elongation factor G (704 aa).

The tr-type G domain maps to 8 to 291 (DKVRNIGIMA…AVVEYLASPV (284 aa)). GTP contacts are provided by residues 17–24 (AHIDAGKT), 90–94 (DTPGH), and 144–147 (NKMD).

This sequence belongs to the TRAFAC class translation factor GTPase superfamily. Classic translation factor GTPase family. EF-G/EF-2 subfamily.

It is found in the cytoplasm. Functionally, catalyzes the GTP-dependent ribosomal translocation step during translation elongation. During this step, the ribosome changes from the pre-translocational (PRE) to the post-translocational (POST) state as the newly formed A-site-bound peptidyl-tRNA and P-site-bound deacylated tRNA move to the P and E sites, respectively. Catalyzes the coordinated movement of the two tRNA molecules, the mRNA and conformational changes in the ribosome. This chain is Elongation factor G, found in Chlorobium phaeobacteroides (strain DSM 266 / SMG 266 / 2430).